Reading from the N-terminus, the 92-residue chain is Small ribosomal subunit protein uS19 (92 aa).

Belongs to the universal ribosomal protein uS19 family.

In terms of biological role, protein S19 forms a complex with S13 that binds strongly to the 16S ribosomal RNA. In Rhizobium etli (strain CIAT 652), this protein is Small ribosomal subunit protein uS19.